The following is a 291-amino-acid chain: Ribonuclease Z (291 aa).

Zn(2+) contacts are provided by His61, His63, Asp65, His66, His133, Asp201, and His257. The active-site Proton acceptor is the Asp65.

It belongs to the RNase Z family. Homodimer. It depends on Zn(2+) as a cofactor.

The catalysed reaction is Endonucleolytic cleavage of RNA, removing extra 3' nucleotides from tRNA precursor, generating 3' termini of tRNAs. A 3'-hydroxy group is left at the tRNA terminus and a 5'-phosphoryl group is left at the trailer molecule.. Its function is as follows. Zinc phosphodiesterase, which displays some tRNA 3'-processing endonuclease activity. Probably involved in tRNA maturation, by removing a 3'-trailer from precursor tRNA. The chain is Ribonuclease Z from Saccharolobus solfataricus (strain ATCC 35092 / DSM 1617 / JCM 11322 / P2) (Sulfolobus solfataricus).